The following is a 615-amino-acid chain: Peptidoglycan-binding protein YepA (615 aa).

The N-terminal stretch at 1–26 is a signal peptide; it reads MRNLAALLPALFLLGSSLLPAGTALA.

Belongs to the bacterial solute-binding protein 5 family. In terms of assembly, the complex is composed of one ATP-binding protein (YejF), two transmembrane proteins (YejB and YejE) and a solute-binding protein (YepA).

The protein localises to the periplasm. Part of the ABC transporter complex YejBEF-YepA involved in the uptake of muropeptides, the breakdown products of cell wall peptidoglycan. The import of muropeptides into the cell enables peptidoglycan recycling, which is vital for cell wall integrity in this bacterium. Probably binds muropeptides. This is Peptidoglycan-binding protein YepA from Agrobacterium fabrum (strain C58 / ATCC 33970) (Agrobacterium tumefaciens (strain C58)).